Here is a 94-residue protein sequence, read N- to C-terminus: Aspartyl/glutamyl-tRNA(Asn/Gln) amidotransferase subunit C (94 aa).

This sequence belongs to the GatC family. As to quaternary structure, heterotrimer of A, B and C subunits.

It catalyses the reaction L-glutamyl-tRNA(Gln) + L-glutamine + ATP + H2O = L-glutaminyl-tRNA(Gln) + L-glutamate + ADP + phosphate + H(+). The catalysed reaction is L-aspartyl-tRNA(Asn) + L-glutamine + ATP + H2O = L-asparaginyl-tRNA(Asn) + L-glutamate + ADP + phosphate + 2 H(+). Its function is as follows. Allows the formation of correctly charged Asn-tRNA(Asn) or Gln-tRNA(Gln) through the transamidation of misacylated Asp-tRNA(Asn) or Glu-tRNA(Gln) in organisms which lack either or both of asparaginyl-tRNA or glutaminyl-tRNA synthetases. The reaction takes place in the presence of glutamine and ATP through an activated phospho-Asp-tRNA(Asn) or phospho-Glu-tRNA(Gln). In Solidesulfovibrio magneticus (strain ATCC 700980 / DSM 13731 / RS-1) (Desulfovibrio magneticus), this protein is Aspartyl/glutamyl-tRNA(Asn/Gln) amidotransferase subunit C.